Reading from the N-terminus, the 416-residue chain is Keratin, type I cuticular Ha1 (416 aa).

The tract at residues 1–56 is head; it reads MPYNFCLPSLSCRTSCSSRPCVPPSCHSCTLPGACNIPANVSNCNWFCEGSFNGSE. Residues 56 to 367 form the IF rod domain; it reads EKETMQFLND…SLLESEDCNL (312 aa). The coil 1A stretch occupies residues 57–91; the sequence is KETMQFLNDRLASYLEKVRQLERDNAELENLIRER. Residues 92–102 are linker 1; it reads SQQQEPLLCPS. Residues 103–203 form a coil 1B region; the sequence is YQSYFKTIEE…HEQEVNTLRC (101 aa). The tract at residues 204 to 219 is linker 12; that stretch reads QLGDRLNVEVDAAPTV. The tract at residues 220–363 is coil 2; sequence DLNRVLNETR…NTYRSLLESE (144 aa). Residues 364–416 are tail; that stretch reads DCNLPSNPCATTNACSKPIGPCLSNPCTSCVPPAPCTPCAPRPRCGPCNSFVR.

The protein belongs to the intermediate filament family. Present in scalp but not in hairless skin. Abundantly expressed in the differentiating cortex of growing (anagen) hair. Expression is restricted to the keratinocytes of the hair cortex and is absent from inner root sheath and medulla.

The protein is Keratin, type I cuticular Ha1 (KRT31) of Homo sapiens (Human).